Consider the following 318-residue polypeptide: Acetyl-coenzyme A carboxylase carboxyl transferase subunit alpha (318 aa).

The CoA carboxyltransferase C-terminal domain occupies 39–297 (RLEKRSQTAL…SEALKAMVGK (259 aa)).

Belongs to the AccA family. In terms of assembly, acetyl-CoA carboxylase is a heterohexamer composed of biotin carboxyl carrier protein (AccB), biotin carboxylase (AccC) and two subunits each of ACCase subunit alpha (AccA) and ACCase subunit beta (AccD).

The protein resides in the cytoplasm. It catalyses the reaction N(6)-carboxybiotinyl-L-lysyl-[protein] + acetyl-CoA = N(6)-biotinyl-L-lysyl-[protein] + malonyl-CoA. Its pathway is lipid metabolism; malonyl-CoA biosynthesis; malonyl-CoA from acetyl-CoA: step 1/1. In terms of biological role, component of the acetyl coenzyme A carboxylase (ACC) complex. First, biotin carboxylase catalyzes the carboxylation of biotin on its carrier protein (BCCP) and then the CO(2) group is transferred by the carboxyltransferase to acetyl-CoA to form malonyl-CoA. The sequence is that of Acetyl-coenzyme A carboxylase carboxyl transferase subunit alpha from Bartonella tribocorum (strain CIP 105476 / IBS 506).